The primary structure comprises 36 residues: Photosystem I reaction center subunit VIII (36 aa).

A helical transmembrane segment spans residues 6 to 26 (LPSIFVPLVGLVFPAIAMASL).

This sequence belongs to the PsaI family.

The protein localises to the plastid. It is found in the chloroplast thylakoid membrane. In terms of biological role, may help in the organization of the PsaL subunit. This is Photosystem I reaction center subunit VIII from Drimys granadensis.